A 340-amino-acid polypeptide reads, in one-letter code: Farnesyl pyrophosphate synthase 1 (340 aa).

Isopentenyl diphosphate contacts are provided by Lys-47, Arg-50, and Gln-85. Mg(2+)-binding residues include Asp-92 and Asp-96. Arg-101 is a binding site for dimethylallyl diphosphate. Residue Arg-102 participates in isopentenyl diphosphate binding. Residues Lys-188, Thr-189, Gln-227, Lys-244, and Lys-253 each contribute to the dimethylallyl diphosphate site.

Belongs to the FPP/GGPP synthase family. Mg(2+) serves as cofactor. In terms of tissue distribution, mainly expressed in trichomes and flowers, and, to a lower extent, in leaves, roots and stems.

The protein resides in the cytoplasm. The protein localises to the nucleus. It carries out the reaction isopentenyl diphosphate + dimethylallyl diphosphate = (2E)-geranyl diphosphate + diphosphate. The enzyme catalyses isopentenyl diphosphate + (2E)-geranyl diphosphate = (2E,6E)-farnesyl diphosphate + diphosphate. It participates in isoprenoid biosynthesis; farnesyl diphosphate biosynthesis; farnesyl diphosphate from geranyl diphosphate and isopentenyl diphosphate: step 1/1. The protein operates within sesquiterpene biosynthesis. Its pathway is isoprenoid biosynthesis; geranyl diphosphate biosynthesis; geranyl diphosphate from dimethylallyl diphosphate and isopentenyl diphosphate: step 1/1. Catalyzes the sequential condensation of isopentenyl pyrophosphate with the allylic pyrophosphates, dimethylallyl pyrophosphate, and then with the resultant geranylpyrophosphate to the ultimate product farnesyl pyrophosphate. The polypeptide is Farnesyl pyrophosphate synthase 1 (Cannabis sativa (Hemp)).